The chain runs to 62 residues: Large ribosomal subunit protein eL24 (62 aa).

Zn(2+)-binding residues include Cys-6, Cys-9, Cys-32, and Cys-36. The C4-type zinc-finger motif lies at 6–36; it reads CYFCGQMLEPGTGKLYIKKDGSTYFMCSSKC.

It belongs to the eukaryotic ribosomal protein eL24 family. In terms of assembly, part of the 50S ribosomal subunit. Forms a cluster with proteins L3 and L14. It depends on Zn(2+) as a cofactor.

Binds to the 23S rRNA. In Methanosarcina mazei (strain ATCC BAA-159 / DSM 3647 / Goe1 / Go1 / JCM 11833 / OCM 88) (Methanosarcina frisia), this protein is Large ribosomal subunit protein eL24.